The sequence spans 198 residues: Golgi to ER traffic protein 1 (198 aa).

Over 1 to 6 (MDPFSI) the chain is Lumenal. Residues 7–26 (LLTLTLIILAQNAVRIVGKS) traverse the membrane as a helical segment. Topologically, residues 27-110 (QIHQSIWNLY…AIEKYLGLAI (84 aa)) are cytoplasmic. A coiled-coil region spans residues 73 to 106 (KWTKLNRKYDQLQTEIKAVSDQVSQQQQAIEKYL). Residues 111–131 (SVTTTLPLWLFRFKYRKQPLF) form a helical membrane-spanning segment. The Lumenal segment spans residues 132 to 155 (YFPKDTFPSYLEWILSFPSVPQGS). Residues 156 to 172 (IGIMFWILLLNKFVSNL) traverse the membrane as a helical segment. The Cytoplasmic portion of the chain corresponds to 173-198 (EFIVKTFSTKVEKPVPIVKVEDLSPK).

The protein belongs to the WRB/GET1 family. As to quaternary structure, component of the Golgi to ER traffic (GET) complex, which is composed of GET1, GET2 and GET3. Within the complex, GET1 and GET2 form a heterotetramer which is stabilized by phosphatidylinositol binding and which binds to the GET3 homodimer.

It is found in the endoplasmic reticulum membrane. The protein resides in the golgi apparatus membrane. Its function is as follows. Required for the post-translational delivery of tail-anchored (TA) proteins to the endoplasmic reticulum. Together with GET2, acts as a membrane receptor for soluble GET3, which recognizes and selectively binds the transmembrane domain of TA proteins in the cytosol. The GET complex cooperates with the HDEL receptor ERD2 to mediate the ATP-dependent retrieval of resident ER proteins that contain a C-terminal H-D-E-L retention signal from the Golgi to the ER. This chain is Golgi to ER traffic protein 1, found in Komagataella phaffii (strain GS115 / ATCC 20864) (Yeast).